A 172-amino-acid polypeptide reads, in one-letter code: 3-hydroxydecanoyl-[acyl-carrier-protein] dehydratase (172 aa).

His-71 is a catalytic residue.

Belongs to the thioester dehydratase family. FabA subfamily. In terms of assembly, homodimer.

It localises to the cytoplasm. It catalyses the reaction a (3R)-hydroxyacyl-[ACP] = a (2E)-enoyl-[ACP] + H2O. It carries out the reaction (3R)-hydroxydecanoyl-[ACP] = (2E)-decenoyl-[ACP] + H2O. The enzyme catalyses (2E)-decenoyl-[ACP] = (3Z)-decenoyl-[ACP]. Its pathway is lipid metabolism; fatty acid biosynthesis. Functionally, necessary for the introduction of cis unsaturation into fatty acids. Catalyzes the dehydration of (3R)-3-hydroxydecanoyl-ACP to E-(2)-decenoyl-ACP and then its isomerization to Z-(3)-decenoyl-ACP. Can catalyze the dehydratase reaction for beta-hydroxyacyl-ACPs with saturated chain lengths up to 16:0, being most active on intermediate chain length. The sequence is that of 3-hydroxydecanoyl-[acyl-carrier-protein] dehydratase from Salmonella choleraesuis (strain SC-B67).